A 767-amino-acid polypeptide reads, in one-letter code: Photosystem I P700 chlorophyll a apoprotein A1 (767 aa).

8 helical membrane-spanning segments follow: residues 72 to 95 (IFSA…FHGA), 158 to 181 (LMAL…FHYH), 197 to 221 (LNHH…HVSL), 305 to 323 (IAHH…GHMY), 364 to 387 (WHAQ…QHMY), 403 to 429 (IGLF…IAMV), 451 to 473 (AIIS…LYIH), and 548 to 566 (FMVH…LILL). Residues Cys590 and Cys599 each coordinate [4Fe-4S] cluster. 2 helical membrane passes run 606-627 (HVFL…HFSW) and 681-703 (TSAY…MFLF). His692 is a binding site for chlorophyll a'. Residues Met700 and Tyr708 each contribute to the chlorophyll a site. Trp709 is a binding site for phylloquinone. Residues 741 to 761 (AVGVAHYLLGGIATTWAFFHA) form a helical membrane-spanning segment.

It belongs to the PsaA/PsaB family. In terms of assembly, the PsaA/B heterodimer binds the P700 chlorophyll special pair and subsequent electron acceptors. PSI consists of a core antenna complex that captures photons, and an electron transfer chain that converts photonic excitation into a charge separation. The cyanobacterial PSI reaction center is composed of one copy each of PsaA,B,C,D,E,F,I,J,K,L,M and X, and forms trimeric complexes. It depends on PSI electron transfer chain: 5 chlorophyll a, 1 chlorophyll a', 2 phylloquinones and 3 4Fe-4S clusters. PSI core antenna: 90 chlorophyll a, 22 carotenoids, 3 phospholipids and 1 galactolipid. P700 is a chlorophyll a/chlorophyll a' dimer, A0 is one or more chlorophyll a, A1 is one or both phylloquinones and FX is a shared 4Fe-4S iron-sulfur center. as a cofactor.

The protein localises to the cellular thylakoid membrane. The enzyme catalyses reduced [plastocyanin] + hnu + oxidized [2Fe-2S]-[ferredoxin] = oxidized [plastocyanin] + reduced [2Fe-2S]-[ferredoxin]. In terms of biological role, psaA and PsaB bind P700, the primary electron donor of photosystem I (PSI), as well as the electron acceptors A0, A1 and FX. PSI is a plastocyanin/cytochrome c6-ferredoxin oxidoreductase, converting photonic excitation into a charge separation, which transfers an electron from the donor P700 chlorophyll pair to the spectroscopically characterized acceptors A0, A1, FX, FA and FB in turn. Oxidized P700 is reduced on the lumenal side of the thylakoid membrane by plastocyanin or cytochrome c6. This is Photosystem I P700 chlorophyll a apoprotein A1 from Synechococcus sp. (strain CC9902).